The chain runs to 429 residues: Serine hydroxymethyltransferase (429 aa).

Residues leucine 126 and 130–132 (GHL) each bind (6S)-5,6,7,8-tetrahydrofolate. At lysine 235 the chain carries N6-(pyridoxal phosphate)lysine. Residue 359-361 (SPF) coordinates (6S)-5,6,7,8-tetrahydrofolate.

Belongs to the SHMT family. Homodimer. Requires pyridoxal 5'-phosphate as cofactor.

The protein resides in the cytoplasm. The enzyme catalyses (6R)-5,10-methylene-5,6,7,8-tetrahydrofolate + glycine + H2O = (6S)-5,6,7,8-tetrahydrofolate + L-serine. Its pathway is one-carbon metabolism; tetrahydrofolate interconversion. The protein operates within amino-acid biosynthesis; glycine biosynthesis; glycine from L-serine: step 1/1. Functionally, catalyzes the reversible interconversion of serine and glycine with tetrahydrofolate (THF) serving as the one-carbon carrier. This reaction serves as the major source of one-carbon groups required for the biosynthesis of purines, thymidylate, methionine, and other important biomolecules. Also exhibits THF-independent aldolase activity toward beta-hydroxyamino acids, producing glycine and aldehydes, via a retro-aldol mechanism. This chain is Serine hydroxymethyltransferase, found in Parasynechococcus marenigrum (strain WH8102).